The following is a 224-amino-acid chain: UPF0758 protein Bpro_0948 (224 aa).

One can recognise an MPN domain in the interval 102-224; the sequence is LFSTPQAVRD…AVSMAELGLL (123 aa). Zn(2+) contacts are provided by histidine 173, histidine 175, and aspartate 186. Positions 173–186 match the JAMM motif motif; the sequence is HNHPSGAATPSRAD.

This sequence belongs to the UPF0758 family.

The polypeptide is UPF0758 protein Bpro_0948 (Polaromonas sp. (strain JS666 / ATCC BAA-500)).